The sequence spans 184 residues: Trichothecene 15-O-acetyltransferase SAT16 (184 aa).

Substrate is bound at residue H154.

It belongs to the trichothecene O-acetyltransferase family.

The protein operates within mycotoxin biosynthesis. Functionally, trichothecene 15-O-acetyltransferase; part of the satratoxin SC2 cluster involved in the biosynthesis of satratoxins, trichothecene mycotoxins that are associated with human food poisonings. Satratoxins are suggested to be made by products of multiple gene clusters (SC1, SC2 and SC3) that encode 21 proteins in all, including polyketide synthases, acetyltransferases, and other enzymes expected to modify the trichothecene skeleton. SC1 encodes 10 proteins, SAT1 to SAT10. The largest are SAT8, which encodes a putative polyketide synthase (PKS) with a conventional non-reducing architecture, and SAT10, a putative protein containing four ankyrin repeats and thus may be involved in protein scaffolding. The putative short-chain reductase SAT3 may assist the PKS in some capacity. SAT6 contains a secretory lipase domain and acts probably as a trichothecene esterase. SAT5 encodes a putative acetyltransferase, and so, with SAT6, may affect endogenous protection from toxicity. The probable transcription factor SAT9 may regulate the expression of the SC1 cluster. SC2 encodes proteins SAT11 to SAT16, the largest of which encodes the putative reducing PKS SAT13. SAT11 is a cytochrome P450 monooxygenase, while SAT14 and SAT16 are probable acetyltransferases. The SC2 cluster may be regulated by the transcription factor SAT15. SC3 is a small cluster that encodes 5 proteins, SAT17 to SAT21. SAT21 is a putative MFS-type transporter which may have a role in exporting secondary metabolites. The four other proteins putatively encoded in SC3 include the taurine hydroxylase-like protein SAT17, the O-methyltransferase SAT18, the acetyltransferase SAT19, and the Cys6-type zinc finger SAT20, the latter being probably involved in regulation of SC3 expression. In Stachybotrys chartarum (strain CBS 109288 / IBT 7711) (Toxic black mold), this protein is Trichothecene 15-O-acetyltransferase SAT16.